A 510-amino-acid chain; its full sequence is GMP synthase [glutamine-hydrolyzing] (510 aa).

A Glutamine amidotransferase type-1 domain is found at 5-195 (LVLILDFGGQ…LYEVCHCQGD (191 aa)). Catalysis depends on C82, which acts as the Nucleophile. Residues H169 and E171 contribute to the active site. In terms of domain architecture, GMPS ATP-PPase spans 196–385 (WTMENYIEKE…LGVPEEIVWR (190 aa)). 223-229 (SGGVDSS) serves as a coordination point for ATP.

Homodimer.

It catalyses the reaction XMP + L-glutamine + ATP + H2O = GMP + L-glutamate + AMP + diphosphate + 2 H(+). It functions in the pathway purine metabolism; GMP biosynthesis; GMP from XMP (L-Gln route): step 1/1. Its function is as follows. Catalyzes the synthesis of GMP from XMP. In Alkaliphilus metalliredigens (strain QYMF), this protein is GMP synthase [glutamine-hydrolyzing].